The sequence spans 148 residues: Hemoglobin subunit beta-A (148 aa).

Residues 3–148 form the Globin domain; the sequence is DWTDAERAAI…VVSALGRQYH (146 aa). Heme b-binding residues include His64 and His93.

The protein belongs to the globin family. In terms of assembly, heterotetramer of two alpha chains and two beta chains. As to expression, red blood cells.

In terms of biological role, involved in oxygen transport from gills to the various peripheral tissues. This Seriola quinqueradiata (Five-ray yellowtail) protein is Hemoglobin subunit beta-A (hbb1).